The primary structure comprises 520 residues: Protein FAM124A (520 aa).

Disordered stretches follow at residues 1 to 34 and 311 to 334; these read MDRK…ELSV and FKSG…SQMD. The segment covering 20–32 has biased composition (low complexity); sequence SDYSRLSSTSSEL.

It belongs to the FAM124 family.

This chain is Protein FAM124A (fam124a), found in Xenopus laevis (African clawed frog).